Here is a 518-residue protein sequence, read N- to C-terminus: Arrestin-related trafficking adapter 10 (518 aa).

A Glycyl lysine isopeptide (Lys-Gly) (interchain with G-Cter in ubiquitin) cross-link involves residue lysine 118.

The protein belongs to the ART10 family. Interacts with RSP5. Ubiquitinated by RSP5.

Its subcellular location is the cytoplasm. Its function is as follows. May regulate endocytosis by recruiting RSP5 ubiquitin ligase activity to specific plasma membrane proteins in response to extracellular stimuli. The polypeptide is Arrestin-related trafficking adapter 10 (ART10) (Saccharomyces cerevisiae (strain Lalvin EC1118 / Prise de mousse) (Baker's yeast)).